A 200-amino-acid chain; its full sequence is GTP cyclohydrolase 1 (200 aa).

Zn(2+) is bound by residues cysteine 87, histidine 90, and cysteine 158.

The protein belongs to the GTP cyclohydrolase I family. As to quaternary structure, toroid-shaped homodecamer, composed of two pentamers of five dimers.

It catalyses the reaction GTP + H2O = 7,8-dihydroneopterin 3'-triphosphate + formate + H(+). Its pathway is cofactor biosynthesis; 7,8-dihydroneopterin triphosphate biosynthesis; 7,8-dihydroneopterin triphosphate from GTP: step 1/1. The sequence is that of GTP cyclohydrolase 1 from Xanthomonas euvesicatoria pv. vesicatoria (strain 85-10) (Xanthomonas campestris pv. vesicatoria).